Here is a 540-residue protein sequence, read N- to C-terminus: Chaperonin GroEL (540 aa).

ATP contacts are provided by residues 30 to 33, Lys-51, 87 to 91, Gly-415, and Asp-495; these read TLGP and DGTTT.

Belongs to the chaperonin (HSP60) family. As to quaternary structure, forms a cylinder of 14 subunits composed of two heptameric rings stacked back-to-back. Interacts with the co-chaperonin GroES.

It is found in the cytoplasm. It carries out the reaction ATP + H2O + a folded polypeptide = ADP + phosphate + an unfolded polypeptide.. Functionally, together with its co-chaperonin GroES, plays an essential role in assisting protein folding. The GroEL-GroES system forms a nano-cage that allows encapsulation of the non-native substrate proteins and provides a physical environment optimized to promote and accelerate protein folding. This chain is Chaperonin GroEL, found in Rhodothermus marinus (Rhodothermus obamensis).